A 143-amino-acid polypeptide reads, in one-letter code: Mite group 2 allergen Pso o 2 (143 aa).

The signal sequence occupies residues 1–17; the sequence is MMKTLVVLAITLAVVSA. Intrachain disulfides connect cysteine 25/cysteine 134, cysteine 38/cysteine 43, and cysteine 89/cysteine 94.

Belongs to the NPC2 family.

Its subcellular location is the secreted. In Psoroptes ovis (Sheep scab mite), this protein is Mite group 2 allergen Pso o 2 (ALLA).